Reading from the N-terminus, the 451-residue chain is Phosphoglucosamine mutase (451 aa).

Catalysis depends on serine 102, which acts as the Phosphoserine intermediate. 4 residues coordinate Mg(2+): serine 102, aspartate 244, aspartate 246, and aspartate 248. Phosphoserine is present on serine 102.

This sequence belongs to the phosphohexose mutase family. Mg(2+) is required as a cofactor. Post-translationally, activated by phosphorylation.

It carries out the reaction alpha-D-glucosamine 1-phosphate = D-glucosamine 6-phosphate. Its function is as follows. Catalyzes the conversion of glucosamine-6-phosphate to glucosamine-1-phosphate. This Lawsonia intracellularis (strain PHE/MN1-00) protein is Phosphoglucosamine mutase.